The following is a 373-amino-acid chain: D-alanine--D-alanine ligase A (373 aa).

The ATP-grasp domain maps to 146-355 (KRLAEFAGIP…YGELLSRLVD (210 aa)). An ATP-binding site is contributed by 179–234 (VEGLSLPVFVKPCNMGSSVGIHKVKTQDALEAALDDAFRYDVKVLVQQGIDAREIE). Residues Asp-308, Glu-322, and Asn-324 each coordinate Mg(2+).

Belongs to the D-alanine--D-alanine ligase family. Mg(2+) serves as cofactor. Requires Mn(2+) as cofactor.

The protein resides in the cytoplasm. It carries out the reaction 2 D-alanine + ATP = D-alanyl-D-alanine + ADP + phosphate + H(+). The protein operates within cell wall biogenesis; peptidoglycan biosynthesis. Cell wall formation. This chain is D-alanine--D-alanine ligase A, found in Bradyrhizobium diazoefficiens (strain JCM 10833 / BCRC 13528 / IAM 13628 / NBRC 14792 / USDA 110).